A 132-amino-acid chain; its full sequence is Small ribosomal subunit protein uS11 (132 aa).

This sequence belongs to the universal ribosomal protein uS11 family. Part of the 30S ribosomal subunit. Interacts with proteins S7 and S18. Binds to IF-3.

Functionally, located on the platform of the 30S subunit, it bridges several disparate RNA helices of the 16S rRNA. Forms part of the Shine-Dalgarno cleft in the 70S ribosome. This chain is Small ribosomal subunit protein uS11, found in Chlamydia caviae (strain ATCC VR-813 / DSM 19441 / 03DC25 / GPIC) (Chlamydophila caviae).